A 305-amino-acid polypeptide reads, in one-letter code: Nuclear egress protein 1 (305 aa).

The disordered stretch occupies residues 1–42 (MYDIAPRRSGSRPGPGRDKTRRRSRFSAAGNPGVERRASRKS). The CCCH-type zinc-finger motif lies at 105–224 (CLTLSGMGYY…YVIFPGTSAH (120 aa)).

This sequence belongs to the herpesviridae NEC1 protein family. Forms a heterohexameric complex with NEC2. Interacts with capsid vertex specific component 2/CVC2; this interaction directs the capsid to the host inner nuclear membrane to initiate budding. Post-translationally, phosphorylated at serine residues in the N-terminus. This phosphorylation regulates the localization within the inner nuclear membrane.

It localises to the host nucleus inner membrane. Its function is as follows. Plays an essential role in virion nuclear egress, the first step of virion release from infected cell. Within the host nucleus, NEC1 interacts with the newly formed capsid through the vertexes and directs it to the inner nuclear membrane by associating with NEC2. Induces the budding of the capsid at the inner nuclear membrane as well as its envelopment into the perinuclear space. There, the NEC1/NEC2 complex promotes the fusion of the enveloped capsid with the outer nuclear membrane and the subsequent release of the viral capsid into the cytoplasm where it will reach the secondary budding sites in the host Golgi or trans-Golgi network. This is Nuclear egress protein 1 from Human herpesvirus 2 (strain HG52) (HHV-2).